A 673-amino-acid polypeptide reads, in one-letter code: Protein kinase C delta type (673 aa).

The C2 domain occupies 1-106 (MAPFLRISFN…KNNGKAEFWL (106 aa)). 2 positions are modified to phosphothreonine: Thr43 and Thr50. Tyr64 bears the Phosphotyrosine mark. Residue Ser130 is modified to Phosphoserine. At Thr141 the chain carries Phosphothreonine. Tyr155 bears the Phosphotyrosine mark. The segment at 158–208 (NHEFIATFFGQPTFCSVCKEFVWGLNKQGYKCRQCNAAIHKKCIDKIIGRC) adopts a Phorbol-ester/DAG-type 1 zinc-finger fold. A Phosphothreonine modification is found at Thr218. A Phorbol-ester/DAG-type 2 zinc finger spans residues 230–280 (PHRFKVYNYMSPTFCDHCGTLLWGLVKQGLKCEDCGMNVHHKCREKVANLC). Ser299 is modified (phosphoserine; by autocatalysis). Tyr311 and Tyr332 each carry phosphotyrosine; by SRC. One can recognise a Protein kinase domain in the interval 347-601 (FTFQKVLGKG…TGNIRLHPFF (255 aa)). Residue 353–361 (LGKGSFGKV) coordinates ATP. At Tyr372 the chain carries Phosphotyrosine. Lys376 lines the ATP pocket. Thr449 carries the post-translational modification Phosphothreonine. Asp471 functions as the Proton acceptor in the catalytic mechanism. Ser504 is modified (phosphoserine). Position 505 is a phosphothreonine; by autocatalysis (Thr505). Tyr565 carries the phosphotyrosine modification. One can recognise an AGC-kinase C-terminal domain in the interval 602-673 (KTINWNLLEK…VNPKYEQFLE (72 aa)). Ser643, Ser652, and Ser662 each carry phosphoserine.

The protein belongs to the protein kinase superfamily. AGC Ser/Thr protein kinase family. PKC subfamily. In terms of assembly, interacts with PDPK1 (via N-terminal region). Interacts with RAD9A. Interacts with CDCP1. Interacts with MUC1. Interacts with VASP. Interacts with CAVIN3. Interacts with PRKD2 (via N-terminus and zing-finger domain 1 and 2) in response to oxidative stress; the interaction is independent of PRKD2 tyrosine phosphorylation. Interacts with PLSC3; interaction is enhanced by UV irradiation. In terms of processing, autophosphorylated and/or phosphorylated at Thr-505, within the activation loop; phosphorylation at Thr-505 is not a prerequisite for enzymatic activity. Autophosphorylated at Ser-299. Upon TNFSF10/TRAIL treatment, phosphorylated at Tyr-155; phosphorylation is required for its translocation to the endoplasmic reticulum and cleavage by caspase-3. Phosphorylated at Tyr-311, Tyr-332 and Tyr-565; phosphorylation of Tyr-311 and Tyr-565 following thrombin or zymosan stimulation potentiates its kinase activity. Phosphorylated by protein kinase PDPK1; phosphorylation is inhibited by the apoptotic C-terminal cleavage product of PKN2. Phosphorylated at Tyr-311 and Tyr-332 by SRC; phosphorylation leads to enhanced autophosphorylation at Thr-505. Phosphorylated at Tyr-311 through a SYK and SRC mechanism downstream of C-type lectin receptors activation, promoting its activation. Post-translationally, proteolytically cleaved into a catalytic subunit and a regulatory subunit by caspase-3 during apoptosis which results in kinase activation.

It is found in the cytoplasm. The protein resides in the nucleus. Its subcellular location is the perinuclear region. The protein localises to the cell membrane. It localises to the mitochondrion. It is found in the endomembrane system. It carries out the reaction L-seryl-[protein] + ATP = O-phospho-L-seryl-[protein] + ADP + H(+). It catalyses the reaction L-threonyl-[protein] + ATP = O-phospho-L-threonyl-[protein] + ADP + H(+). The enzyme catalyses L-tyrosyl-[protein] + ATP = O-phospho-L-tyrosyl-[protein] + ADP + H(+). Novel PKCs (PRKCD, PRKCE, PRKCH and PRKCQ) are calcium-insensitive, but activated by diacylglycerol (DAG) and phosphatidylserine. Three specific sites; Thr-505 (activation loop of the kinase domain), Ser-643 (turn motif) and Ser-662 (hydrophobic region), need to be phosphorylated for its full activation. Activated by caspase-3 (CASP3) cleavage during apoptosis. After cleavage, the pseudosubstrate motif in the regulatory subunit is released from the substrate recognition site of the catalytic subunit, which enables PRKCD to become constitutively activated. The catalytic subunit which displays properties of a sphingosine-dependent protein kinase is activated by D-erythro-sphingosine (Sph) or N,N-dimethyl-D-erythrosphingosine (DMS) or N,N,N-trimethyl-D-erythrosphingosine (TMS), but not by ceramide or Sph-1-P and is strongly inhibited by phosphatidylserine. Its function is as follows. Calcium-independent, phospholipid- and diacylglycerol (DAG)-dependent serine/threonine-protein kinase that plays contrasting roles in cell death and cell survival by functioning as a pro-apoptotic protein during DNA damage-induced apoptosis, but acting as an anti-apoptotic protein during cytokine receptor-initiated cell death, is involved in tumor suppression, is required for oxygen radical production by NADPH oxidase and acts as a positive or negative regulator in platelet functional responses. Upon DNA damage, activates the promoter of the death-promoting transcription factor BCLAF1/Btf to trigger BCLAF1-mediated p53/TP53 gene transcription and apoptosis. In response to oxidative stress, interact with and activate CHUK/IKKA in the nucleus, causing the phosphorylation of p53/TP53. In the case of ER stress or DNA damage-induced apoptosis, can form a complex with the tyrosine-protein kinase ABL1 which trigger apoptosis independently of p53/TP53. In cytosol can trigger apoptosis by activating MAPK11 or MAPK14, inhibiting AKT1 and decreasing the level of X-linked inhibitor of apoptosis protein (XIAP), whereas in nucleus induces apoptosis via the activation of MAPK8 or MAPK9. Upon ionizing radiation treatment, is required for the activation of the apoptosis regulators BAX and BAK, which trigger the mitochondrial cell death pathway. Can phosphorylate MCL1 and target it for degradation which is sufficient to trigger for BAX activation and apoptosis. Is required for the control of cell cycle progression both at G1/S and G2/M phases. Mediates phorbol 12-myristate 13-acetate (PMA)-induced inhibition of cell cycle progression at G1/S phase by up-regulating the CDK inhibitor CDKN1A/p21 and inhibiting the cyclin CCNA2 promoter activity. In response to UV irradiation can phosphorylate CDK1, which is important for the G2/M DNA damage checkpoint activation. Can protect glioma cells from the apoptosis induced by TNFSF10/TRAIL, probably by inducing increased phosphorylation and subsequent activation of AKT1. Can also act as tumor suppressor upon mitogenic stimulation with PMA or TPA. In N-formyl-methionyl-leucyl-phenylalanine (fMLP)-treated cells, is required for NCF1 (p47-phox) phosphorylation and activation of NADPH oxidase activity, and regulates TNF-elicited superoxide anion production in neutrophils, by direct phosphorylation and activation of NCF1 or indirectly through MAPK1/3 (ERK1/2) signaling pathways. Involved in antifungal immunity by mediating phosphorylation and activation of CARD9 downstream of C-type lectin receptors activation, promoting interaction between CARD9 and BCL10, followed by activation of NF-kappa-B and MAP kinase p38 pathways. May also play a role in the regulation of NADPH oxidase activity in eosinophil after stimulation with IL5, leukotriene B4 or PMA. In collagen-induced platelet aggregation, acts a negative regulator of filopodia formation and actin polymerization by interacting with and negatively regulating VASP phosphorylation. Downstream of PAR1, PAR4 and CD36/GP4 receptors, regulates differentially platelet dense granule secretion; acts as a positive regulator in PAR-mediated granule secretion, whereas it negatively regulates CD36/GP4-mediated granule release. Phosphorylates MUC1 in the C-terminal and regulates the interaction between MUC1 and beta-catenin. The catalytic subunit phosphorylates 14-3-3 proteins (YWHAB, YWHAZ and YWHAH) in a sphingosine-dependent fashion. Phosphorylates ELAVL1 in response to angiotensin-2 treatment. Phosphorylates mitochondrial phospholipid scramblase 3 (PLSCR3), resulting in increased cardiolipin expression on the mitochondrial outer membrane which facilitates apoptosis. Phosphorylates SMPD1 which induces SMPD1 secretion. In terms of biological role, truncated isoform 2 is inactive. In Rattus norvegicus (Rat), this protein is Protein kinase C delta type.